The sequence spans 200 residues: Superoxide dismutase [Fe] (200 aa).

Histidine 28, histidine 80, aspartate 162, and histidine 166 together coordinate Fe cation.

It belongs to the iron/manganese superoxide dismutase family. In terms of assembly, homodimer. Fe cation serves as cofactor.

The catalysed reaction is 2 superoxide + 2 H(+) = H2O2 + O2. Its function is as follows. Destroys superoxide anion radicals which are normally produced within the cells and which are toxic to biological systems. This is Superoxide dismutase [Fe] (sodB) from Nostoc sp. (strain PCC 7120 / SAG 25.82 / UTEX 2576).